Reading from the N-terminus, the 211-residue chain is Endonuclease V (211 aa).

Mg(2+) contacts are provided by D31 and E95. A disordered region spans residues 182–211 (IYEVKNTPSPNRSRKKRGNRGKDNNNSQGN).

The protein belongs to the endonuclease V family. Mg(2+) serves as cofactor.

It is found in the cytoplasm. It catalyses the reaction Endonucleolytic cleavage at apurinic or apyrimidinic sites to products with a 5'-phosphate.. DNA repair enzyme involved in the repair of deaminated bases. Selectively cleaves double-stranded DNA at the second phosphodiester bond 3' to a deoxyinosine leaving behind the intact lesion on the nicked DNA. This Pyrococcus horikoshii (strain ATCC 700860 / DSM 12428 / JCM 9974 / NBRC 100139 / OT-3) protein is Endonuclease V.